The sequence spans 339 residues: MKLRILKSAVTNPWFNLATEDWIFNTLNPDSHTLFLWRNSETVVIGRSQNPWVECKIDKMEADDVFLARRQSGGGAVFHDLGNTNFTFLSPKDDYDQAANFTIIINALKKLGIDADLSGRNDMQVGDKKISGSAFKHTADRSFHHGTLLVNANMQKLGDYLNPHPLKLKAKGIKSVRARVANLVEFNEDINHETLSDAIIEAFREYYRDTDYGDTAPVEELDEASLAKQPNLNKYYQQMADWDWRFGKTPEFTHHIETRFNWGIIDLHLDVKQAAIREVVIFSDALNVELIDLLKESLADVKYDKHDIKAKFDELNRAHPELAAQIDDVSEWLIGEMEG.

The BPL/LPL catalytic domain maps to 28 to 211 (NPDSHTLFLW…AFREYYRDTD (184 aa)). ATP contacts are provided by residues Arg70, 75–78 (GAVF), and Lys129. A (R)-lipoate-binding site is contributed by Lys129.

This sequence belongs to the LplA family. In terms of assembly, monomer.

It is found in the cytoplasm. The catalysed reaction is L-lysyl-[lipoyl-carrier protein] + (R)-lipoate + ATP = N(6)-[(R)-lipoyl]-L-lysyl-[lipoyl-carrier protein] + AMP + diphosphate + H(+). It functions in the pathway protein modification; protein lipoylation via exogenous pathway; protein N(6)-(lipoyl)lysine from lipoate: step 1/2. Its pathway is protein modification; protein lipoylation via exogenous pathway; protein N(6)-(lipoyl)lysine from lipoate: step 2/2. Catalyzes both the ATP-dependent activation of exogenously supplied lipoate to lipoyl-AMP and the transfer of the activated lipoyl onto the lipoyl domains of lipoate-dependent enzymes. The sequence is that of Lipoate-protein ligase A from Psychrobacter cryohalolentis (strain ATCC BAA-1226 / DSM 17306 / VKM B-2378 / K5).